The sequence spans 2008 residues: Histone-lysine N-methyltransferase SETD1B (2008 aa).

The span at 1-20 (MSFREIKAGEKAKHPEDHGK) shows a compositional bias: basic and acidic residues. The disordered stretch occupies residues 1–42 (MSFREIKAGEKAKHPEDHGKKQSSSWINGMENSTQASTSVEK). Residues 22–39 (QSSSWINGMENSTQASTS) show a composition bias toward polar residues. One can recognise an RRM domain in the interval 111 to 199 (DEFYVGPVPP…NIIHVELDTK (89 aa)). 9 disordered regions span residues 249–390 (NLSS…SSYK), 402–652 (FPQS…APIT), 682–725 (PPGF…PPLP), 950–1172 (RKEP…DKRE), 1309–1328 (TKLP…PGRE), 1345–1461 (VPSS…FTPT), 1563–1600 (VGAS…MYSG), 1674–1712 (KEEE…PQFR), and 1814–1842 (EEPP…RRSE). A compositionally biased stretch (low complexity) spans 251–264 (SSVGSSVTPNSSTP). Polar residues-rich tracts occupy residues 265 to 293 (FSHD…QGTP), 301 to 315 (PFSQ…QTTP), 360 to 381 (HQFS…TPPL), 405 to 414 (SEEQPFAQTS), and 456 to 491 (DSNS…QHNS). The segment covering 492 to 521 (LDSRIEMLLKEQRTKLPFLNEHDSDNEVRM) has biased composition (basic and acidic residues). The segment covering 524–537 (SPISSSSSQLSPIP) has biased composition (low complexity). Polar residues-rich tracts occupy residues 540-560 (GSNS…SSTG) and 582-604 (ASLN…QLNR). 2 stretches are compositionally biased toward basic and acidic residues: residues 606–617 (SKVETLEVKEMV) and 626–636 (EKMDESQHSSG). The segment covering 637-646 (EDMEISDDEM) has biased composition (acidic residues). The span at 979 to 997 (ERDRDASDTTSDLSKKDAE) shows a compositional bias: basic and acidic residues. A compositionally biased stretch (acidic residues) spans 1011-1020 (LDSEGEEGDE). A compositionally biased stretch (basic and acidic residues) spans 1021 to 1031 (TSGKEEESSSE). Acidic residues-rich tracts occupy residues 1050–1094 (EEEE…EEDA) and 1105–1149 (ESSD…EDQD). Over residues 1150–1172 (REAMVAETEHEPASHELPDDKRE) the composition is skewed to basic and acidic residues. Positions 1345-1356 (VPSSTVPLPSTP) are enriched in low complexity. Residues 1378-1392 (SIEEEIPRTPGRDIL) show a composition bias toward basic and acidic residues. Positions 1418–1427 (LTGSSLTLSS) are enriched in low complexity. Composition is skewed to basic residues over residues 1577-1587 (LPKRRPGRPRR) and 1681-1690 (KPKRQWRRQK). A compositionally biased stretch (pro residues) spans 1699–1710 (IPSPEYSPPQPQ). Residues 1840–1845 (RSEQRR) carry the RxxxRR motif motif. One can recognise an SET domain in the interval 1869 to 1986 (KKLKFCKSHI…VNEEITYDYK (118 aa)). Tyr-1985 contributes to the S-adenosyl-L-methionine binding site. The 17-residue stretch at 1992–2008 (VKIPCLCGSENCRGTLN) folds into the Post-SET domain.

Belongs to the class V-like SAM-binding methyltransferase superfamily. In terms of assembly, component of the SET1B/COMPASS complex.

It localises to the nucleus speckle. The protein resides in the chromosome. It carries out the reaction L-lysyl(4)-[histone H3] + 3 S-adenosyl-L-methionine = N(6),N(6),N(6)-trimethyl-L-lysyl(4)-[histone H3] + 3 S-adenosyl-L-homocysteine + 3 H(+). In terms of biological role, histone methyltransferase that specifically methylates 'Lys-4' of histone H3, when part of the SET1 histone methyltransferase (HMT) complex, but not if the neighboring 'Lys-9' residue is already methylated. H3 'Lys-4' methylation represents a specific tag for epigenetic transcriptional activation. The polypeptide is Histone-lysine N-methyltransferase SETD1B (SETD1B) (Gallus gallus (Chicken)).